A 165-amino-acid chain; its full sequence is Glucosamine 6-phosphate N-acetyltransferase (165 aa).

Residues 22-165 (FKVRPLAKDD…DDCNFMTQRF (144 aa)) form the N-acetyltransferase domain. Substrate-binding positions include T44, 92–95 (KFIH), and 104–106 (EDV). 114–119 (RQKLGA) lines the acetyl-CoA pocket. Substrate-binding positions include 135–136 (YK) and R164.

This sequence belongs to the acetyltransferase family. GNA1 subfamily.

It carries out the reaction D-glucosamine 6-phosphate + acetyl-CoA = N-acetyl-D-glucosamine 6-phosphate + CoA + H(+). Its pathway is nucleotide-sugar biosynthesis; UDP-N-acetyl-alpha-D-glucosamine biosynthesis; N-acetyl-alpha-D-glucosamine 1-phosphate from alpha-D-glucosamine 6-phosphate (route I): step 1/2. The polypeptide is Glucosamine 6-phosphate N-acetyltransferase (gna-1) (Caenorhabditis elegans).